Reading from the N-terminus, the 383-residue chain is BRISC and BRCA1-A complex member 2 (383 aa).

M1 bears the N-acetylmethionine mark. The residue at position 2 (S2) is a Phosphoserine. 2 UEV-like regions span residues 30–147 (DATN…TLLE) and 275–364 (IAAF…RAKA).

The protein belongs to the BABAM2 family. As to quaternary structure, component of the ARISC complex, at least composed of UIMC1/RAP80, ABRAXAS1, BRCC3/BRCC36, BABAM2 and BABAM1/NBA1. Component of the BRCA1-A complex, at least composed of BRCA1, BARD1, UIMC1/RAP80, ABRAXAS1, BRCC3/BRCC36, BABAM2 and BABAM1/NBA1. In the BRCA1-A complex, interacts directly with ABRAXAS1, BRCC3/BRCC36 and BABAM1/NBA1. Binds polyubiquitin. Component of the BRISC complex, at least composed of ABRAXAS2, BRCC3/BRCC36, BABAM2 and BABAM1/NBA1. Identified in a complex with SHMT2 and the other subunits of the BRISC complex. Component of the BRCA1/BRCA2 containing complex (BRCC), which also contains BRCA1, BRCA2, BARD1, BRCC3/BRCC36 and RAD51. BRCC is a ubiquitin E3 ligase complex that enhances cellular survival following DNA damage. May interact with FAS and TNFRSF1A. Expressed in brain, heart, kidney, liver, lung, testis, germinal center B-cells and various mouse cell lines.

It is found in the cytoplasm. It localises to the nucleus. In terms of biological role, component of the BRCA1-A complex, a complex that specifically recognizes 'Lys-63'-linked ubiquitinated histones H2A and H2AX at DNA lesions sites, leading to target the BRCA1-BARD1 heterodimer to sites of DNA damage at double-strand breaks (DSBs). The BRCA1-A complex also possesses deubiquitinase activity that specifically removes 'Lys-63'-linked ubiquitin on histones H2A and H2AX. In the BRCA1-A complex, it acts as an adapter that bridges the interaction between BABAM1/NBA1 and the rest of the complex, thereby being required for the complex integrity and modulating the E3 ubiquitin ligase activity of the BRCA1-BARD1 heterodimer. Probably also plays a role as a component of the BRISC complex, a multiprotein complex that specifically cleaves 'Lys-63'-linked ubiquitin. May regulate TNF-alpha signaling through its interactions with TNFRSF1A. Its function is as follows. Component of the BRCA1-A complex, a complex that specifically recognizes 'Lys-63'-linked ubiquitinated histones H2A and H2AX at DNA lesions sites, leading to target the BRCA1-BARD1 heterodimer to sites of DNA damage at double-strand breaks (DSBs). The BRCA1-A complex also possesses deubiquitinase activity that specifically removes 'Lys-63'-linked ubiquitin on histones H2A and H2AX. In the BRCA1-A complex, it acts as an adapter that bridges the interaction between BABAM1/NBA1 and the rest of the complex, thereby being required for the complex integrity and modulating the E3 ubiquitin ligase activity of the BRCA1-BARD1 heterodimer. Component of the BRISC complex, a multiprotein complex that specifically cleaves 'Lys-63'-linked ubiquitin in various substrates. Within the BRISC complex, acts as an adapter that bridges the interaction between BABAM1/NBA1 and the rest of the complex, thereby being required for the complex integrity. The BRISC complex is required for normal mitotic spindle assembly and microtubule attachment to kinetochores via its role in deubiquitinating NUMA1. The BRISC complex plays a role in interferon signaling via its role in the deubiquitination of the interferon receptor IFNAR1; deubiquitination increases IFNAR1 activity by enhancing its stability and cell surface expression. Down-regulates the response to bacterial lipopolysaccharide (LPS) via its role in IFNAR1 deubiquitination. May play a role in homeostasis or cellular differentiation in cells of neural, epithelial and germline origins. May also act as a death receptor-associated anti-apoptotic protein, which inhibits the mitochondrial apoptotic pathway. May regulate TNF-alpha signaling through its interactions with TNFRSF1A; however these effects may be indirect. The polypeptide is BRISC and BRCA1-A complex member 2 (Babam2) (Mus musculus (Mouse)).